Here is a 201-residue protein sequence, read N- to C-terminus: UPF0098 protein MT1961 (201 aa).

A disordered region spans residues 125–146 (TADGETPGGGISLPNSSGQPAY).

Belongs to the UPF0098 family.

This is UPF0098 protein MT1961 from Mycobacterium tuberculosis (strain CDC 1551 / Oshkosh).